Reading from the N-terminus, the 391-residue chain is MVDFGALPPEINSARMYAGPGSASLVAAAQMWDSVASDLFSAASAFQSVVWGLTVGSWIGSSAGLMVAAASPYVAWMSVTAGQAELTAAQVRVAAAAYETAYGLTVPPPVIAENRAELMILIATNLLGQNTPAIAVNEAEYGEMWAQDAAAMFGYAAATATATATLLPFEEAPEMTSAGGLLEQAAAVEEASDTAAANQLMNNVPQALQQLAQPTQGTTPSSKLGGLWKTVSPHRSPISNMVSMANNHMSMTNSGVSMTNTLSSMLKGFAPAAAAQAVQTAAQNGVRAMSSLGSSLGSSGLGGGVAANLGRAASVGSLSVPQAWAAANQAVTPAARALPLTSLTSAAERGPGQMLGGLPVGQMGARAGGGLSGVLRVPPRPYVMPHSPAAG.

Belongs to the mycobacterial PPE family. Interacts with human TLR2.

The protein resides in the secreted. Its subcellular location is the cell wall. It is found in the cell surface. Its function is as follows. Could be a crucial virulence factor for intracellular survival of M.tuberculosis. Favors development of Th2-type response, and down-regulates the pro-inflammatory and Th1-type response. Specifically interacts with the human Toll-like receptor 2 (TLR2), leading to an early and sustained activation of p38 MAPK, which induces IL-10 production and activates Th2-type immune response. Also inhibits pro-inflammatory cytokines IL-12p40 and TNF-alpha production. Acts by up-regulating the expression as well as tyrosine phosphorylation of suppressor of cytokine signaling 3 (SOCS-3), leading to the inhibition of phosphorylation of I-kappa-B-alpha, thereby preventing nuclear translocation of the NF-kappa-B/REL subunits and expression of NF-kappa-B regulated genes like IL-12 and TNF-alpha. Induction of SOCS-3 probably depends on the activation of p38 MAPK. This is PPE family protein PPE18 from Mycobacterium tuberculosis (strain ATCC 25618 / H37Rv).